The sequence spans 283 residues: Probable cytochrome c oxidase subunit 3 (283 aa).

The next 6 membrane-spanning stretches (helical) occupy residues 26–46 (PWPV…VSFM), 51–71 (FNIY…YSWW), 94–114 (IGMA…FASF), 179–199 (CVTA…MQAY), 217–237 (FYLA…FLII), and 261–281 (AWYW…VYIF).

It belongs to the cytochrome c oxidase subunit 3 family.

Its subcellular location is the cell membrane. The enzyme catalyses 4 Fe(II)-[cytochrome c] + O2 + 8 H(+)(in) = 4 Fe(III)-[cytochrome c] + 2 H2O + 4 H(+)(out). This chain is Probable cytochrome c oxidase subunit 3 (ctaE), found in Rickettsia conorii (strain ATCC VR-613 / Malish 7).